We begin with the raw amino-acid sequence, 227 residues long: 2-C-methyl-D-erythritol 4-phosphate cytidylyltransferase (227 aa).

The protein belongs to the IspD/TarI cytidylyltransferase family. IspD subfamily.

The enzyme catalyses 2-C-methyl-D-erythritol 4-phosphate + CTP + H(+) = 4-CDP-2-C-methyl-D-erythritol + diphosphate. It participates in isoprenoid biosynthesis; isopentenyl diphosphate biosynthesis via DXP pathway; isopentenyl diphosphate from 1-deoxy-D-xylulose 5-phosphate: step 2/6. In terms of biological role, catalyzes the formation of 4-diphosphocytidyl-2-C-methyl-D-erythritol from CTP and 2-C-methyl-D-erythritol 4-phosphate (MEP). This is 2-C-methyl-D-erythritol 4-phosphate cytidylyltransferase from Dehalococcoides mccartyi (strain ATCC BAA-2266 / KCTC 15142 / 195) (Dehalococcoides ethenogenes (strain 195)).